We begin with the raw amino-acid sequence, 163 residues long: Augmin complex subunit wac (163 aa).

The stretch at 86–115 (ELQRILSSIEEATRDVVMLERFNAAAEERL) forms a coiled coil.

Component of the augmin complex composed of dgt2, dgt3, dgt4, dgt5, dgt6, msd1, msd5 and wac. The complex interacts directly or indirectly with microtubules and is required for centrosome-independent generation of spindle microtubules. wac interacts directly (via coiled coil) with dgt2. As to expression, in adult females, detected only in the abdomen with no expression in the head or thorax (at protein level).

It localises to the cytoplasm. Its subcellular location is the cytoskeleton. It is found in the spindle. The protein localises to the spindle pole. Its function is as follows. As part of the augmin complex, plays a role in centrosome-independent generation of spindle microtubules. The complex is required for mitotic spindle assembly through its involvement in localizing gamma-tubulin to spindle microtubules. wac is dispensable for somatic mitosis and for assembly of spindle microtubules in oocytes during female meiosis but is required during female meiosis for chromosome alignment and segregation. It is required for microtubule assembly near spindle poles in oocytes. It is also required for acentrosomal microtubule nucleation and meiotic spindle formation during male meiosis. wac binds to microtubules in vitro. The sequence is that of Augmin complex subunit wac from Drosophila melanogaster (Fruit fly).